The primary structure comprises 296 residues: Transmembrane protein 156 (296 aa).

Over 1-4 (MTKT) the chain is Cytoplasmic. The helical transmembrane segment at 5 to 25 (ALLKLFVAIVITFILILPEYF) threads the bilayer. Residues 26-211 (KTPKERTLEL…EMDIKNITCS (186 aa)) lie on the Extracellular side of the membrane. 2 N-linked (GlcNAc...) asparagine glycosylation sites follow: Asn-45 and Asn-156. Residues 212–232 (MKITWYILVLLVFIFLIILTI) form a helical membrane-spanning segment. Residues 233-296 (RKILEGQRRV…QEVLPPIPEL (64 aa)) are Cytoplasmic-facing.

Its subcellular location is the membrane. The chain is Transmembrane protein 156 (TMEM156) from Homo sapiens (Human).